The following is a 44-amino-acid chain: EVLLEGPSGVLFKDGQKKYLPPGVKIVLLSKAGAVLSNGDNVQF.

Tandem repeats lie at residues 3-20 and 27-44.

In terms of tissue distribution, calcified shell.

This is Cuticle protein CP463 from Cancer pagurus (Rock crab).